Here is a 398-residue protein sequence, read N- to C-terminus: NADH-ubiquinone oxidoreductase 49 kDa subunit (398 aa).

Belongs to the complex I 49 kDa subunit family.

It localises to the mitochondrion. The catalysed reaction is a ubiquinone + NADH + 5 H(+)(in) = a ubiquinol + NAD(+) + 4 H(+)(out). Its function is as follows. Core subunit of the mitochondrial membrane respiratory chain NADH dehydrogenase (Complex I) that is believed to belong to the minimal assembly required for catalysis. Complex I functions in the transfer of electrons from NADH to the respiratory chain. The immediate electron acceptor for the enzyme is believed to be ubiquinone. Component of the iron-sulfur (IP) fragment of the enzyme. Component of the iron-sulfur (IP) fragment of the enzyme. The protein is NADH-ubiquinone oxidoreductase 49 kDa subunit (NAD7) of Pylaiella littoralis (Seaweed).